Reading from the N-terminus, the 508-residue chain is GMP synthase [glutamine-hydrolyzing] (508 aa).

Residues 1–189 (MILVLDFGSQ…ALLVCGCEKT (189 aa)) form the Glutamine amidotransferase type-1 domain. The Nucleophile role is filled by C78. Active-site residues include H163 and E165. A GMPS ATP-PPase domain is found at 190-383 (WGMQHFAQRE…LGVSQDFLMR (194 aa)). 217–223 (SGGVDST) contacts ATP.

Homodimer.

The enzyme catalyses XMP + L-glutamine + ATP + H2O = GMP + L-glutamate + AMP + diphosphate + 2 H(+). It participates in purine metabolism; GMP biosynthesis; GMP from XMP (L-Gln route): step 1/1. Functionally, catalyzes the synthesis of GMP from XMP. This chain is GMP synthase [glutamine-hydrolyzing], found in Helicobacter pylori (strain P12).